The primary structure comprises 320 residues: Esterase LipI (320 aa).

Residues S165, D261, and H291 contribute to the active site.

Belongs to the 'GDXG' lipolytic enzyme family.

The catalysed reaction is a fatty acid ester + H2O = an aliphatic alcohol + a fatty acid + H(+). It carries out the reaction a butanoate ester + H2O = an aliphatic alcohol + butanoate + H(+). The enzyme catalyses an octanoate ester + H2O = an aliphatic alcohol + octanoate + H(+). It catalyses the reaction decanoate ester + H2O = decanoate + an aliphatic alcohol + H(+). The catalysed reaction is an acetyl ester + H2O = an aliphatic alcohol + acetate + H(+). It carries out the reaction a dodecanoate ester + H2O = an aliphatic alcohol + dodecanoate + H(+). Its activity is regulated as follows. Inhibited by ionic detergents SDS (anions) and CTAB (cationic). Strongly inhibited by Zn(2+). Its function is as follows. Esterase that can hydrolyze short-chain esters with the carbon chain containing 2 to 12 carbon atoms. In vitro, pNP-butyrate is the preferred substrate. The protein is Esterase LipI of Mycobacterium tuberculosis (strain ATCC 25618 / H37Rv).